Consider the following 98-residue polypeptide: NADH-ubiquinone oxidoreductase chain 4L (98 aa).

3 consecutive transmembrane segments (helical) span residues 1-21 (MSLI…GLLM), 29-49 (ALLC…LTIL), and 61-81 (IILL…LVMI).

It belongs to the complex I subunit 4L family. Core subunit of respiratory chain NADH dehydrogenase (Complex I) which is composed of 45 different subunits.

It localises to the mitochondrion inner membrane. The catalysed reaction is a ubiquinone + NADH + 5 H(+)(in) = a ubiquinol + NAD(+) + 4 H(+)(out). Its function is as follows. Core subunit of the mitochondrial membrane respiratory chain NADH dehydrogenase (Complex I) which catalyzes electron transfer from NADH through the respiratory chain, using ubiquinone as an electron acceptor. Part of the enzyme membrane arm which is embedded in the lipid bilayer and involved in proton translocation. The protein is NADH-ubiquinone oxidoreductase chain 4L (MT-ND4L) of Platanista minor (Indus river dolphin).